Reading from the N-terminus, the 302-residue chain is Arginase (302 aa).

Mn(2+)-binding residues include His-103, Asp-126, His-128, and Asp-130. Substrate contacts are provided by residues 128 to 132 (HGDLN), 139 to 141 (SGN), and Asp-180. Mn(2+) is bound by residues Asp-229 and Asp-231. 2 residues coordinate substrate: Thr-243 and Glu-274.

The protein belongs to the arginase family. The cofactor is Mn(2+).

It catalyses the reaction L-arginine + H2O = urea + L-ornithine. It participates in nitrogen metabolism; urea cycle; L-ornithine and urea from L-arginine: step 1/1. This is Arginase (arg) from Staphylococcus aureus (strain MSSA476).